A 295-amino-acid chain; its full sequence is 4-hydroxy-tetrahydrodipicolinate synthase (295 aa).

Position 48 (T48) interacts with pyruvate. Y135 functions as the Proton donor/acceptor in the catalytic mechanism. The active-site Schiff-base intermediate with substrate is the K163. V204 contacts pyruvate.

Belongs to the DapA family. As to quaternary structure, homotetramer; dimer of dimers.

It localises to the cytoplasm. The catalysed reaction is L-aspartate 4-semialdehyde + pyruvate = (2S,4S)-4-hydroxy-2,3,4,5-tetrahydrodipicolinate + H2O + H(+). Its pathway is amino-acid biosynthesis; L-lysine biosynthesis via DAP pathway; (S)-tetrahydrodipicolinate from L-aspartate: step 3/4. Functionally, catalyzes the condensation of (S)-aspartate-beta-semialdehyde [(S)-ASA] and pyruvate to 4-hydroxy-tetrahydrodipicolinate (HTPA). This is 4-hydroxy-tetrahydrodipicolinate synthase from Francisella philomiragia subsp. philomiragia (strain ATCC 25017 / CCUG 19701 / FSC 153 / O#319-036).